The following is a 366-amino-acid chain: MAGNTFGQIFTVTTFGESHGAGLGCIIDGCPPGLELSEADIQFDLDRRKPGTSRHVTQRREADQVEILSGVFEGKTTGTPIALLIRNTDQRSKDYGNIATAFRPGHADYTYWHKYGTRDYRGGGRSSARETAARVAAGAVAKKWLKEKFGTEITAYVTQVGEKKIRFEGSEHISQNPFFAANQSQIAELEHYMDGVRKSLDSVGAKLHIEAANVPVGLGEPVFDRLDAEIAYAMMGINAVKGVEIGAGFDSVTQRGSEHGDELTPQGFLSNHSGGILGGISTGQDICVNIAIKPTSSIATPRRSIDIHGNPVELATRGRHDPCVGLRTAPIAEAMLALVLIDHALRHRAQNADVAADTPDISRSDK.

NADP(+) is bound by residues R48 and R54. FMN contacts are provided by residues 125–127 (RSS), 238–239 (NA), G278, 293–297 (KPTSS), and R319.

Belongs to the chorismate synthase family. In terms of assembly, homotetramer. Requires FMNH2 as cofactor.

It carries out the reaction 5-O-(1-carboxyvinyl)-3-phosphoshikimate = chorismate + phosphate. The protein operates within metabolic intermediate biosynthesis; chorismate biosynthesis; chorismate from D-erythrose 4-phosphate and phosphoenolpyruvate: step 7/7. Catalyzes the anti-1,4-elimination of the C-3 phosphate and the C-6 proR hydrogen from 5-enolpyruvylshikimate-3-phosphate (EPSP) to yield chorismate, which is the branch point compound that serves as the starting substrate for the three terminal pathways of aromatic amino acid biosynthesis. This reaction introduces a second double bond into the aromatic ring system. This is Chorismate synthase from Neisseria gonorrhoeae (strain ATCC 700825 / FA 1090).